The primary structure comprises 308 residues: UPF0282 protein PYRAB09800 (308 aa).

This sequence belongs to the UPF0282 family.

This Pyrococcus abyssi (strain GE5 / Orsay) protein is UPF0282 protein PYRAB09800.